A 640-amino-acid polypeptide reads, in one-letter code: Chaperone protein HtpG (640 aa).

The interval 1-348 (MAQYKFETEV…SEDLPLNVSR (348 aa)) is a; substrate-binding. The b stretch occupies residues 349–565 (EILQQNRILS…ETDPSLQMER (217 aa)). The segment at 566–640 (MMRAMGQFNT…RLNRLMTNLK (75 aa)) is c.

This sequence belongs to the heat shock protein 90 family. Homodimer.

It localises to the cytoplasm. In terms of biological role, molecular chaperone. Has ATPase activity. The polypeptide is Chaperone protein HtpG (Treponema denticola (strain ATCC 35405 / DSM 14222 / CIP 103919 / JCM 8153 / KCTC 15104)).